The primary structure comprises 246 residues: Ubiquinone biosynthesis O-methyltransferase (246 aa).

Residues Arg-36, Gly-60, Asp-81, and Leu-123 each coordinate S-adenosyl-L-methionine.

This sequence belongs to the methyltransferase superfamily. UbiG/COQ3 family.

The enzyme catalyses a 3-demethylubiquinol + S-adenosyl-L-methionine = a ubiquinol + S-adenosyl-L-homocysteine + H(+). It catalyses the reaction a 3-(all-trans-polyprenyl)benzene-1,2-diol + S-adenosyl-L-methionine = a 2-methoxy-6-(all-trans-polyprenyl)phenol + S-adenosyl-L-homocysteine + H(+). The protein operates within cofactor biosynthesis; ubiquinone biosynthesis. O-methyltransferase that catalyzes the 2 O-methylation steps in the ubiquinone biosynthetic pathway. The protein is Ubiquinone biosynthesis O-methyltransferase of Rickettsia typhi (strain ATCC VR-144 / Wilmington).